Here is a 323-residue protein sequence, read N- to C-terminus: Macrolide efflux protein A (323 aa).

The next 9 membrane-spanning stretches (helical) occupy residues 6–26 (VLSM…AIGV), 51–71 (LTIV…VLFI), 105–125 (SLQS…YSVW), 128–148 (NAII…VLIV), 182–202 (FALL…NALF), 219–239 (ITEI…GLFG), 245–265 (ILLI…SGLL), 270–290 (FFIF…YSGV), and 303–323 (YLGR…PIGL).

It belongs to the major facilitator superfamily. Drug:H(+) antiporter-3 (DHA3) (TC 2.A.1.21) family.

The protein resides in the cell membrane. In terms of biological role, confers resistance to 14-membered macrolides including erythromycin and to 15-membered macrolides but not to 16-membered macrolides, lincosamides or analogs of streptogramin B. May function as an efflux pump to regulate intracellular macrolide levels. This chain is Macrolide efflux protein A (mefA), found in Enterococcus faecalis (Streptococcus faecalis).